A 265-amino-acid polypeptide reads, in one-letter code: Homeobox protein engrailed-2-A (265 aa).

Basic and acidic residues-rich tracts occupy residues 1–12 and 102–115; these read MEENEQNNREVE and GEKKSDLAMEETLK. Disordered regions lie at residues 1 to 38, 75 to 140, and 156 to 181; these read MEENEQNNREVEPQQESGEESNRGILHQAPPGNHQPHH, LSGA…KATQ, and DRPSSGPRSRKPKKKSVSKEDKRPRT. The segment covering 122–136 has biased composition (low complexity); that stretch reads DHSLSSDSDSSQTSS. Positions 176 to 235 form a DNA-binding region, homeobox; it reads DKRPRTAFTADQLQRLKAEFQTNRYLTEQRRQSLAQELSLNESQIKIWFQNKRAKIKKAT.

Belongs to the engrailed homeobox family.

Its subcellular location is the nucleus. This Xenopus laevis (African clawed frog) protein is Homeobox protein engrailed-2-A (en2-a).